Here is a 360-residue protein sequence, read N- to C-terminus: MTATLERRESASLWERFCSWITSTENRLYIGWFGVLMIPTLLTATTVFIIAFIAAPPVDIDGIREPVAGSLLYGNNIITGAVIPSSASIGIHFYPIWEAASLDEWLYNGGPYQLIVDHFLLGVCGWIGREWEFSYRLGMRPWISVAFTAPVAAASAVFLVYPIGQGSFSDGMPLGISGTFNFMLVFQAEHNILMHPFHQLGVAGVFGGSLFSAMHGSLVTSSLIRETTENESANYGYKFGQEEETYNIVAAHGYFGRLIFQYASFNNSRALHFFLGLWPVVGIWFTALGIMTMAFNLNGFNFNQSVVDSQGRVINTWADILNRANLGIEVMHERNAHNFPLDLASGESLPVALTAPAVIG.

Helical transmembrane passes span 29-46 (YIGWFGVLMIPTLLTATT), 118-133 (HFLLGVCGWIGREWEF), and 142-156 (WISVAFTAPVAAASA). H118 lines the chlorophyll a pocket. W126 contacts pheophytin a. Residues D170 and E189 each coordinate [CaMn4O5] cluster. The chain crosses the membrane as a helical span at residues 197 to 218 (FHQLGVAGVFGGSLFSAMHGSL). H198 lines the chlorophyll a pocket. A quinone contacts are provided by residues H215 and 264 to 265 (SF). Fe cation is bound at residue H215. A Fe cation-binding site is contributed by H272. Residues 274–288 (FLGLWPVVGIWFTAL) form a helical membrane-spanning segment. Residues H332, E333, D342, and A344 each coordinate [CaMn4O5] cluster. A propeptide spanning residues 345–360 (SGESLPVALTAPAVIG) is cleaved from the precursor.

It belongs to the reaction center PufL/M/PsbA/D family. As to quaternary structure, PSII is composed of 1 copy each of membrane proteins PsbA, PsbB, PsbC, PsbD, PsbE, PsbF, PsbH, PsbI, PsbJ, PsbK, PsbL, PsbM, PsbT, PsbX, PsbY, PsbZ, Psb30/Ycf12, at least 3 peripheral proteins of the oxygen-evolving complex and a large number of cofactors. It forms dimeric complexes. It depends on The D1/D2 heterodimer binds P680, chlorophylls that are the primary electron donor of PSII, and subsequent electron acceptors. It shares a non-heme iron and each subunit binds pheophytin, quinone, additional chlorophylls, carotenoids and lipids. D1 provides most of the ligands for the Mn4-Ca-O5 cluster of the oxygen-evolving complex (OEC). There is also a Cl(-1) ion associated with D1 and D2, which is required for oxygen evolution. The PSII complex binds additional chlorophylls, carotenoids and specific lipids. as a cofactor. In terms of processing, tyr-161 forms a radical intermediate that is referred to as redox-active TyrZ, YZ or Y-Z. C-terminally processed by CTPA; processing is essential to allow assembly of the oxygen-evolving complex and thus photosynthetic growth.

It is found in the plastid. It localises to the chloroplast thylakoid membrane. The catalysed reaction is 2 a plastoquinone + 4 hnu + 2 H2O = 2 a plastoquinol + O2. In terms of biological role, photosystem II (PSII) is a light-driven water:plastoquinone oxidoreductase that uses light energy to abstract electrons from H(2)O, generating O(2) and a proton gradient subsequently used for ATP formation. It consists of a core antenna complex that captures photons, and an electron transfer chain that converts photonic excitation into a charge separation. The D1/D2 (PsbA/PsbD) reaction center heterodimer binds P680, the primary electron donor of PSII as well as several subsequent electron acceptors. The protein is Photosystem II protein D1 of Guillardia theta (Cryptophyte).